We begin with the raw amino-acid sequence, 205 residues long: MKLRGLYAITDSQLLTGKFLSYVEAALDGGVTLLQYRDKTGDDSRRLREATELLKLCERYKTRLIINDDAELAARLGVGVHLGQTDGSLPDARALLGHKAIVGATCHGQLELAEQAKADGATYVAFGRFFNSQTKPGAPAVPLDLIAQVRARVHLPIAVIGGITLENAPQLVEHGADLLAVVHGLFGAETPQEVTRRAKAFMALL.

Residues 35–39 (QYRDK) and N67 contribute to the 4-amino-2-methyl-5-(diphosphooxymethyl)pyrimidine site. Mg(2+)-binding residues include D68 and D86. T105 contacts 4-amino-2-methyl-5-(diphosphooxymethyl)pyrimidine. 132–134 (SQT) provides a ligand contact to 2-[(2R,5Z)-2-carboxy-4-methylthiazol-5(2H)-ylidene]ethyl phosphate. Residue K135 participates in 4-amino-2-methyl-5-(diphosphooxymethyl)pyrimidine binding. G162 provides a ligand contact to 2-[(2R,5Z)-2-carboxy-4-methylthiazol-5(2H)-ylidene]ethyl phosphate.

This sequence belongs to the thiamine-phosphate synthase family. Requires Mg(2+) as cofactor.

It carries out the reaction 2-[(2R,5Z)-2-carboxy-4-methylthiazol-5(2H)-ylidene]ethyl phosphate + 4-amino-2-methyl-5-(diphosphooxymethyl)pyrimidine + 2 H(+) = thiamine phosphate + CO2 + diphosphate. The catalysed reaction is 2-(2-carboxy-4-methylthiazol-5-yl)ethyl phosphate + 4-amino-2-methyl-5-(diphosphooxymethyl)pyrimidine + 2 H(+) = thiamine phosphate + CO2 + diphosphate. It catalyses the reaction 4-methyl-5-(2-phosphooxyethyl)-thiazole + 4-amino-2-methyl-5-(diphosphooxymethyl)pyrimidine + H(+) = thiamine phosphate + diphosphate. It functions in the pathway cofactor biosynthesis; thiamine diphosphate biosynthesis; thiamine phosphate from 4-amino-2-methyl-5-diphosphomethylpyrimidine and 4-methyl-5-(2-phosphoethyl)-thiazole: step 1/1. Its function is as follows. Condenses 4-methyl-5-(beta-hydroxyethyl)thiazole monophosphate (THZ-P) and 2-methyl-4-amino-5-hydroxymethyl pyrimidine pyrophosphate (HMP-PP) to form thiamine monophosphate (TMP). The protein is Thiamine-phosphate synthase of Pseudomonas syringae pv. tomato (strain ATCC BAA-871 / DC3000).